Consider the following 619-residue polypeptide: Kinesin light chain 4 (619 aa).

An N-acetylserine modification is found at Ser-2. A TPR 1 repeat occupies 55-88 (QQGGHEEGLVHEKARQLRRSMENIELGLSEAQVM). A coiled-coil region spans residues 65 to 155 (HEKARQLRRS…HLEFLRQLRQ (91 aa)). The segment covering 156-175 (YDEDGHGMEEKEGEATKDSL) has biased composition (basic and acidic residues). Residues 156 to 199 (YDEDGHGMEEKEGEATKDSLDDLFPNEEEEDSGNDLSRGQGAAA) form a disordered region. Ser-174 is modified (phosphoserine). The segment covering 179–188 (FPNEEEEDSG) has biased composition (acidic residues). TPR repeat units follow at residues 211–244 (LRTL…LERT), 253–286 (ATML…REST), 295–328 (AATL…REKV), 337–370 (AKQL…YESQ), and 379–412 (ARTK…AHVQ). A Phosphoserine modification is found at Ser-460. The TPR 7 repeat unit spans residues 464–497 (NTTLKNLGALYRRQGKLEAAETLEECALRSRKQG). Ser-565, Ser-566, and Ser-590 each carry phosphoserine. The disordered stretch occupies residues 571 to 619 (RKLQGTEPRPSSSSMKRAASLNYLNQPNAAPLQVSRGLSASTVDLSSSS). Residues 609–619 (SASTVDLSSSS) show a composition bias toward low complexity. A Phosphothreonine modification is found at Thr-612.

It belongs to the kinesin light chain family. As to quaternary structure, oligomeric complex composed of two heavy chains and two light chains.

It is found in the cytoplasm. The protein resides in the cytoskeleton. Its function is as follows. Kinesin is a microtubule-associated force-producing protein that may play a role in organelle transport. The light chain may function in coupling of cargo to the heavy chain or in the modulation of its ATPase activity. The protein is Kinesin light chain 4 (Klc4) of Mus musculus (Mouse).